The sequence spans 662 residues: Zinc finger protein 17 (662 aa).

The KRAB domain occupies 8–101 (MVFEDVAIHF…LLKDILHLAE (94 aa)). 16 consecutive C2H2-type zinc fingers follow at residues 190–212 (YSCT…QKIH), 218–240 (YECS…QRNH), 246–268 (YKCS…QKIH), 274–296 (YECS…QRIH), 302–324 (YVCS…QKIH), 358–380 (FYCC…QRVH), 386–408 (YECN…QKVH), 414–436 (YECS…QRVH), 442–464 (YECN…QRVH), 470–492 (YECS…QRVH), 498–520 (FECS…QRIH), 526–548 (YECS…RRNH), 554–576 (FECT…QKVH), 582–604 (YKCS…ERVH), 610–632 (YECS…RRIH), and 638–660 (YQCS…QKVH).

Belongs to the krueppel C2H2-type zinc-finger protein family.

Its subcellular location is the nucleus. May be involved in transcriptional regulation. This is Zinc finger protein 17 (ZNF17) from Homo sapiens (Human).